The following is a 225-amino-acid chain: Leucyl/phenylalanyl-tRNA--protein transferase (225 aa).

It belongs to the L/F-transferase family.

The protein localises to the cytoplasm. The enzyme catalyses N-terminal L-lysyl-[protein] + L-leucyl-tRNA(Leu) = N-terminal L-leucyl-L-lysyl-[protein] + tRNA(Leu) + H(+). It carries out the reaction N-terminal L-arginyl-[protein] + L-leucyl-tRNA(Leu) = N-terminal L-leucyl-L-arginyl-[protein] + tRNA(Leu) + H(+). The catalysed reaction is L-phenylalanyl-tRNA(Phe) + an N-terminal L-alpha-aminoacyl-[protein] = an N-terminal L-phenylalanyl-L-alpha-aminoacyl-[protein] + tRNA(Phe). In terms of biological role, functions in the N-end rule pathway of protein degradation where it conjugates Leu, Phe and, less efficiently, Met from aminoacyl-tRNAs to the N-termini of proteins containing an N-terminal arginine or lysine. This is Leucyl/phenylalanyl-tRNA--protein transferase from Nitrobacter hamburgensis (strain DSM 10229 / NCIMB 13809 / X14).